The primary structure comprises 394 residues: E3 ubiquitin-protein ligase RNF149 (394 aa).

The first 31 residues, Met-1–Gly-31, serve as a signal peptide directing secretion. N-linked (GlcNAc...) asparagine glycosylation is found at Asn-51 and Asn-141. The region spanning Ser-66 to Val-171 is the PA domain. Residues Val-197–Phe-217 form a helical membrane-spanning segment. An RING-type; atypical zinc finger spans residues Cys-265 to Lys-306. Residues Asp-321 to Cys-394 are disordered. Residue Thr-327 is modified to Phosphothreonine. Residue Asn-339 is glycosylated (N-linked (GlcNAc...) asparagine). Ser-341 and Ser-344 each carry phosphoserine. Residues Ser-352–Ser-362 are compositionally biased toward low complexity.

The protein resides in the membrane. It carries out the reaction S-ubiquitinyl-[E2 ubiquitin-conjugating enzyme]-L-cysteine + [acceptor protein]-L-lysine = [E2 ubiquitin-conjugating enzyme]-L-cysteine + N(6)-ubiquitinyl-[acceptor protein]-L-lysine.. It participates in protein modification; protein ubiquitination. Its function is as follows. E3 ubiquitin-protein ligase. Ubiquitinates BRAF, inducing its proteasomal degradation. This is E3 ubiquitin-protein ligase RNF149 (Rnf149) from Mus musculus (Mouse).